The following is a 989-amino-acid chain: Zinc finger SWIM domain-containing protein 4 (989 aa).

The interval 1–32 is disordered; it reads MEPPAAKRSRGCPAGPEERDAGAGAARGRGRP. Residues 139 to 176 form an SWIM-type zinc finger; sequence YHVSISFDRCKITSVSCGCDNRDLFYCAHVVALSLYRI.

The polypeptide is Zinc finger SWIM domain-containing protein 4 (ZSWIM4) (Homo sapiens (Human)).